We begin with the raw amino-acid sequence, 208 residues long: 2-dehydro-3-deoxy-phosphogluconate aldolase (208 aa).

The active-site Proton acceptor is the E41. 3 residues coordinate pyruvate: R45, T68, and K128. K128 functions as the Schiff-base intermediate with substrate in the catalytic mechanism.

It belongs to the KHG/KDPG aldolase family. As to quaternary structure, homotrimer.

It is found in the cytoplasm. It carries out the reaction 2-dehydro-3-deoxy-6-phospho-D-gluconate = D-glyceraldehyde 3-phosphate + pyruvate. Its pathway is carbohydrate acid metabolism; 2-dehydro-3-deoxy-D-gluconate degradation; D-glyceraldehyde 3-phosphate and pyruvate from 2-dehydro-3-deoxy-D-gluconate: step 2/2. Involved in the degradation of glucose via the Entner-Doudoroff pathway. Catalyzes the reversible, stereospecific retro-aldol cleavage of 2-keto-3-deoxy-6-phosphogluconate (KDPG) to pyruvate and D-glyceraldehyde-3-phosphate. The chain is 2-dehydro-3-deoxy-phosphogluconate aldolase from Zymomonas mobilis subsp. mobilis (strain ATCC 31821 / ZM4 / CP4).